Reading from the N-terminus, the 90-residue chain is DNA-binding protein HRm (90 aa).

Belongs to the bacterial histone-like protein family.

In terms of biological role, histone-like DNA-binding protein which is capable of wrapping DNA to stabilize it, and thus to prevent its denaturation under extreme environmental conditions. The protein is DNA-binding protein HRm (hupB) of Rhizobium meliloti (strain 1021) (Ensifer meliloti).